The chain runs to 382 residues: D-galactonate dehydratase (382 aa).

Residue D183 participates in Mg(2+) binding. H185 functions as the Proton donor in the catalytic mechanism. Residues E209 and E235 each contribute to the Mg(2+) site. H285 acts as the Proton acceptor in catalysis.

The protein belongs to the mandelate racemase/muconate lactonizing enzyme family. GalD subfamily. Requires Mg(2+) as cofactor.

It catalyses the reaction D-galactonate = 2-dehydro-3-deoxy-D-galactonate + H2O. It participates in carbohydrate acid metabolism; D-galactonate degradation; D-glyceraldehyde 3-phosphate and pyruvate from D-galactonate: step 1/3. Catalyzes the dehydration of D-galactonate to 2-keto-3-deoxy-D-galactonate. The protein is D-galactonate dehydratase of Escherichia coli O9:H4 (strain HS).